We begin with the raw amino-acid sequence, 535 residues long: GMP synthase [glutamine-hydrolyzing] (535 aa).

One can recognise a Glutamine amidotransferase type-1 domain in the interval 4-210 (KILILDFGSQ…VHEICHCKPD (207 aa)). The active-site Nucleophile is the C85. Residues H184 and E186 contribute to the active site. Residues 211 to 403 (WVMGDYIAEA…LGLPREMVYR (193 aa)) enclose the GMPS ATP-PPase domain. Position 238–244 (238–244 (SGGVDSS)) interacts with ATP.

As to quaternary structure, homodimer.

The catalysed reaction is XMP + L-glutamine + ATP + H2O = GMP + L-glutamate + AMP + diphosphate + 2 H(+). The protein operates within purine metabolism; GMP biosynthesis; GMP from XMP (L-Gln route): step 1/1. In terms of biological role, catalyzes the synthesis of GMP from XMP. The chain is GMP synthase [glutamine-hydrolyzing] from Polynucleobacter asymbioticus (strain DSM 18221 / CIP 109841 / QLW-P1DMWA-1) (Polynucleobacter necessarius subsp. asymbioticus).